Consider the following 415-residue polypeptide: Probable RAD2-like endonuclease 369L (415 aa).

The segment at 1–114 is N-domain; it reads MGIKNLTKFI…EDVKKKTLSL (114 aa). Mg(2+) is bound by residues Asp34, Glu86, Glu198, Glu200, Asp219, Asp221, and Asp277. Residues 163 to 297 form an I-domain region; that stretch reads VKQRHRYDIR…VKSYELIKVQ (135 aa).

The protein belongs to the XPG/RAD2 endonuclease family. Mg(2+) is required as a cofactor.

Its subcellular location is the host nucleus. Functionally, probable endonuclease. The polypeptide is Probable RAD2-like endonuclease 369L (Acheta domesticus (House cricket)).